A 95-amino-acid chain; its full sequence is Co-chaperonin GroES (95 aa).

This sequence belongs to the GroES chaperonin family. Heptamer of 7 subunits arranged in a ring. Interacts with the chaperonin GroEL.

Its subcellular location is the cytoplasm. In terms of biological role, together with the chaperonin GroEL, plays an essential role in assisting protein folding. The GroEL-GroES system forms a nano-cage that allows encapsulation of the non-native substrate proteins and provides a physical environment optimized to promote and accelerate protein folding. GroES binds to the apical surface of the GroEL ring, thereby capping the opening of the GroEL channel. In Xylella fastidiosa (strain M23), this protein is Co-chaperonin GroES.